The primary structure comprises 473 residues: Ribosomal RNA small subunit methyltransferase F (473 aa).

Residues 124-130 (ASAPGSK), Glu-148, Asp-175, and Asp-193 each bind S-adenosyl-L-methionine. Catalysis depends on Cys-246, which acts as the Nucleophile.

This sequence belongs to the class I-like SAM-binding methyltransferase superfamily. RsmB/NOP family.

The protein localises to the cytoplasm. It carries out the reaction cytidine(1407) in 16S rRNA + S-adenosyl-L-methionine = 5-methylcytidine(1407) in 16S rRNA + S-adenosyl-L-homocysteine + H(+). Specifically methylates the cytosine at position 1407 (m5C1407) of 16S rRNA. This is Ribosomal RNA small subunit methyltransferase F from Aliivibrio fischeri (strain ATCC 700601 / ES114) (Vibrio fischeri).